A 91-amino-acid polypeptide reads, in one-letter code: Small ribosomal subunit protein bS18 (91 aa).

The tract at residues 1–27 (MTQQSNTERKPRAKGPKRPRKPKVDPF) is disordered. Positions 11 to 21 (PRAKGPKRPRK) are enriched in basic residues.

Belongs to the bacterial ribosomal protein bS18 family. Part of the 30S ribosomal subunit. Forms a tight heterodimer with protein bS6.

Functionally, binds as a heterodimer with protein bS6 to the central domain of the 16S rRNA, where it helps stabilize the platform of the 30S subunit. The protein is Small ribosomal subunit protein bS18 of Deinococcus geothermalis (strain DSM 11300 / CIP 105573 / AG-3a).